The primary structure comprises 256 residues: Ras-related protein RabJ (256 aa).

16-23 is a binding site for GTP; the sequence is GSSDVGKT. The Effector region motif lies at 38-46; it reads LTSTIGASF. Residues 64 to 68 and 122 to 125 contribute to the GTP site; these read DSAGQ and NKID. Residues 229–256 form a disordered region; that stretch reads NGHLQGSINGHNNQNSTNYSDNSDQCCG. Positions 230 to 256 are enriched in polar residues; it reads GHLQGSINGHNNQNSTNYSDNSDQCCG. 2 S-geranylgeranyl cysteine lipidation sites follow: cysteine 254 and cysteine 255.

Belongs to the small GTPase superfamily. Rab family.

The protein localises to the cell membrane. This chain is Ras-related protein RabJ (rabJ), found in Dictyostelium discoideum (Social amoeba).